The sequence spans 412 residues: CCA-adding enzyme (412 aa).

2 residues coordinate ATP: serine 41 and lysine 44. Positions 41 and 44 each coordinate CTP. Mg(2+)-binding residues include aspartate 53, aspartate 55, and aspartate 106. Residues histidine 129, lysine 149, and tyrosine 158 each contribute to the ATP site. Positions 129, 149, and 158 each coordinate CTP.

The protein belongs to the tRNA nucleotidyltransferase/poly(A) polymerase family. Archaeal CCA-adding enzyme subfamily. Homodimer. Requires Mg(2+) as cofactor.

The catalysed reaction is a tRNA precursor + 2 CTP + ATP = a tRNA with a 3' CCA end + 3 diphosphate. The enzyme catalyses a tRNA with a 3' CCA end + 2 CTP + ATP = a tRNA with a 3' CCACCA end + 3 diphosphate. Its function is as follows. Catalyzes the addition and repair of the essential 3'-terminal CCA sequence in tRNAs without using a nucleic acid template. Adds these three nucleotides in the order of C, C, and A to the tRNA nucleotide-73, using CTP and ATP as substrates and producing inorganic pyrophosphate. tRNA 3'-terminal CCA addition is required both for tRNA processing and repair. Also involved in tRNA surveillance by mediating tandem CCA addition to generate a CCACCA at the 3' terminus of unstable tRNAs. While stable tRNAs receive only 3'-terminal CCA, unstable tRNAs are marked with CCACCA and rapidly degraded. This is CCA-adding enzyme from Saccharolobus islandicus (strain M.16.27) (Sulfolobus islandicus).